The following is a 326-amino-acid chain: MAKSMATLDSGTTCSSWNQSGDRLAAGSLNGKLSIYESSTSSSSTFSCTSKVRVSESSIVKIVWLPSEYGDAVACVCEDGSLSIWEELSEDAHGLEWKLCKSMKNKSSQVLDVQFGVSRKSLKMVAAYSDGYLRVFELLNPLELKNWQLQAEFQNVIDSLSTLGKPSSLSASVSWNPMKGEEQEPSFVLAFNSDSPHLNSSKIWEFDEAHNRWLAVAELALPEDKGDPVYALSWAPNIGRPYEVVAVATHKGIGIWHVGLAPDLEGRLPVKKVSSLSGHQGEVWQMEWDMSGMTLASTGSDGMVKLWQSNLNGEWHEQATLEPVPS.

WD repeat units follow at residues 7 to 46 (TLDSGTTCSSWNQSGDRLAAGSLNGKLSIYESSTSSSSTF), 54 to 95 (VSES…AHGL), 105 to 146 (NKSS…ELKN), 224 to 266 (DKGD…DLEG), and 278 to 317 (GHQGEVWQMEWDMSGMTLASTGSDGMVKLWQSNLNGEWHE).

It belongs to the WD repeat SEC13 family. As to quaternary structure, part of the nuclear pore complex (NPC). The NPC has an eight-fold symmetrical structure comprising a central transport channel and two rings, the cytoplasmic and nuclear rings, to which eight filaments are attached. The cytoplasmic filaments have loose ends, while the nuclear filaments are joined in a distal ring, forming a nuclear basket. NPCs are highly dynamic in configuration and composition, and can be devided in 3 subcomplexes, the NUP62 subcomplex, the NUP107-160 subcomplex and the NUP93 subcomplex, containing approximately 30 different nucleoporin proteins.

It is found in the nucleus envelope. It localises to the nucleus. The protein localises to the cytoplasm. Its subcellular location is the nuclear pore complex. Its function is as follows. Required for proper export of mRNAs from the nucleus to the cytoplasm. The polypeptide is Protein SEH1 (Arabidopsis thaliana (Mouse-ear cress)).